Here is a 118-residue protein sequence, read N- to C-terminus: Large ribosomal subunit protein bL20 (118 aa).

Belongs to the bacterial ribosomal protein bL20 family.

Binds directly to 23S ribosomal RNA and is necessary for the in vitro assembly process of the 50S ribosomal subunit. It is not involved in the protein synthesizing functions of that subunit. This Oceanobacillus iheyensis (strain DSM 14371 / CIP 107618 / JCM 11309 / KCTC 3954 / HTE831) protein is Large ribosomal subunit protein bL20.